A 75-amino-acid chain; its full sequence is UPF0352 protein KPN78578_25810 (75 aa).

It belongs to the UPF0352 family.

The protein is UPF0352 protein KPN78578_25810 of Klebsiella pneumoniae subsp. pneumoniae (strain ATCC 700721 / MGH 78578).